The following is a 118-amino-acid chain: NADH-quinone oxidoreductase subunit A 1 (118 aa).

3 helical membrane passes run 1 to 21 (MLGVYLPIIVLVAVAVIFGLA), 60 to 80 (FYIIAMLFILFDIEAVFMYPW), and 87 to 107 (LGIFGVVEMGLFIVILFVGYI).

Belongs to the complex I subunit 3 family. NDH-1 is composed of 14 different subunits. Subunits NuoA, H, J, K, L, M, N constitute the membrane sector of the complex.

The protein resides in the cell inner membrane. The catalysed reaction is a quinone + NADH + 5 H(+)(in) = a quinol + NAD(+) + 4 H(+)(out). In terms of biological role, NDH-1 shuttles electrons from NADH, via FMN and iron-sulfur (Fe-S) centers, to quinones in the respiratory chain. The immediate electron acceptor for the enzyme in this species is believed to be ubiquinone. Couples the redox reaction to proton translocation (for every two electrons transferred, four hydrogen ions are translocated across the cytoplasmic membrane), and thus conserves the redox energy in a proton gradient. This is NADH-quinone oxidoreductase subunit A 1 from Geobacter sulfurreducens (strain ATCC 51573 / DSM 12127 / PCA).